A 410-amino-acid polypeptide reads, in one-letter code: Methylamine dehydrogenase heavy chain (410 aa).

The signal sequence occupies residues 1-35 (MTHAYTKVRQALCYGSATLGAAALAALIAAGSAAA).

The protein belongs to the aromatic amine dehydrogenase heavy chain family. In terms of assembly, tetramer of two light and two heavy chains.

It is found in the periplasm. The enzyme catalyses 2 oxidized [amicyanin] + methylamine + H2O = 2 reduced [amicyanin] + formaldehyde + NH4(+) + 2 H(+). Methylamine dehydrogenase carries out the oxidation of methylamine. Electrons are passed from methylamine dehydrogenase to amicyanin. This Methylorubrum extorquens (strain ATCC 14718 / DSM 1338 / JCM 2805 / NCIMB 9133 / AM1) (Methylobacterium extorquens) protein is Methylamine dehydrogenase heavy chain (mauB).